The sequence spans 177 residues: tRNA (cytidine(56)-2'-O)-methyltransferase (177 aa).

S-adenosyl-L-methionine contacts are provided by residues Leu-84 and Gly-109 to Val-113.

The protein belongs to the aTrm56 family. As to quaternary structure, homodimer.

It localises to the cytoplasm. It catalyses the reaction cytidine(56) in tRNA + S-adenosyl-L-methionine = 2'-O-methylcytidine(56) in tRNA + S-adenosyl-L-homocysteine + H(+). Specifically catalyzes the AdoMet-dependent 2'-O-ribose methylation of cytidine at position 56 in tRNAs. The chain is tRNA (cytidine(56)-2'-O)-methyltransferase from Methanosarcina acetivorans (strain ATCC 35395 / DSM 2834 / JCM 12185 / C2A).